Consider the following 252-residue polypeptide: Probable transcriptional regulatory protein Lxx10750 (252 aa).

This sequence belongs to the TACO1 family.

The protein localises to the cytoplasm. The protein is Probable transcriptional regulatory protein Lxx10750 of Leifsonia xyli subsp. xyli (strain CTCB07).